A 159-amino-acid polypeptide reads, in one-letter code: 2-C-methyl-D-erythritol 2,4-cyclodiphosphate synthase (159 aa).

Positions 10 and 12 each coordinate a divalent metal cation. Residues 10–12 (DVH) and 36–37 (HS) contribute to the 4-CDP-2-C-methyl-D-erythritol 2-phosphate site. An a divalent metal cation-binding site is contributed by histidine 44. 4-CDP-2-C-methyl-D-erythritol 2-phosphate is bound by residues 58–60 (DIG), 63–67 (FPDTD), 102–108 (AQAPKMA), 134–137 (TTTE), phenylalanine 141, and arginine 144.

It belongs to the IspF family. Homotrimer. The cofactor is a divalent metal cation.

It catalyses the reaction 4-CDP-2-C-methyl-D-erythritol 2-phosphate = 2-C-methyl-D-erythritol 2,4-cyclic diphosphate + CMP. It functions in the pathway isoprenoid biosynthesis; isopentenyl diphosphate biosynthesis via DXP pathway; isopentenyl diphosphate from 1-deoxy-D-xylulose 5-phosphate: step 4/6. Functionally, involved in the biosynthesis of isopentenyl diphosphate (IPP) and dimethylallyl diphosphate (DMAPP), two major building blocks of isoprenoid compounds. Catalyzes the conversion of 4-diphosphocytidyl-2-C-methyl-D-erythritol 2-phosphate (CDP-ME2P) to 2-C-methyl-D-erythritol 2,4-cyclodiphosphate (ME-CPP) with a corresponding release of cytidine 5-monophosphate (CMP). The polypeptide is 2-C-methyl-D-erythritol 2,4-cyclodiphosphate synthase (Idiomarina loihiensis (strain ATCC BAA-735 / DSM 15497 / L2-TR)).